The primary structure comprises 405 residues: Phosphopentomutase (405 aa).

Positions 10, 303, 308, 344, 345, and 356 each coordinate Mn(2+).

It belongs to the phosphopentomutase family. Requires Mn(2+) as cofactor.

It localises to the cytoplasm. It catalyses the reaction 2-deoxy-alpha-D-ribose 1-phosphate = 2-deoxy-D-ribose 5-phosphate. It carries out the reaction alpha-D-ribose 1-phosphate = D-ribose 5-phosphate. The protein operates within carbohydrate degradation; 2-deoxy-D-ribose 1-phosphate degradation; D-glyceraldehyde 3-phosphate and acetaldehyde from 2-deoxy-alpha-D-ribose 1-phosphate: step 1/2. Isomerase that catalyzes the conversion of deoxy-ribose 1-phosphate (dRib-1-P) and ribose 1-phosphate (Rib-1-P) to deoxy-ribose 5-phosphate (dRib-5-P) and ribose 5-phosphate (Rib-5-P), respectively. The sequence is that of Phosphopentomutase from Shewanella frigidimarina (strain NCIMB 400).